The chain runs to 206 residues: ATP phosphoribosyltransferase (206 aa).

Belongs to the ATP phosphoribosyltransferase family. Short subfamily. In terms of assembly, heteromultimer composed of HisG and HisZ subunits.

It is found in the cytoplasm. The enzyme catalyses 1-(5-phospho-beta-D-ribosyl)-ATP + diphosphate = 5-phospho-alpha-D-ribose 1-diphosphate + ATP. It participates in amino-acid biosynthesis; L-histidine biosynthesis; L-histidine from 5-phospho-alpha-D-ribose 1-diphosphate: step 1/9. Its function is as follows. Catalyzes the condensation of ATP and 5-phosphoribose 1-diphosphate to form N'-(5'-phosphoribosyl)-ATP (PR-ATP). Has a crucial role in the pathway because the rate of histidine biosynthesis seems to be controlled primarily by regulation of HisG enzymatic activity. This Brachyspira hyodysenteriae (strain ATCC 49526 / WA1) protein is ATP phosphoribosyltransferase.